Here is a 401-residue protein sequence, read N- to C-terminus: Inositol phosphorylceramide synthase catalytic subunit AUR1 (401 aa).

At 1–41 (MANPFSRWFLSERPPNCHVADLETSLDPHQTLLKVQKYKPA) the chain is on the cytoplasmic side. A helical membrane pass occupies residues 42–62 (LSDWVHYIFLGSIMLFVFITN). Topologically, residues 63–64 (PA) are lumenal. Residues 65–85 (PWIFKILFYCFLGTLFIIPAT) form a helical membrane-spanning segment. Over 86-87 (SQ) the chain is Cytoplasmic. Residues 88-108 (FFFNALPILTWVALYFTSSYF) traverse the membrane as a helical segment. Over 109-155 (PDDRRPPITVKVLPAVETILYGDNLSDILATSTNSFLDILAWLPYGL) the chain is Lumenal. N132 is a glycosylation site (N-linked (GlcNAc...) asparagine). Residues 156–176 (FHFGAPFVVAAILFVFGPPTV) traverse the membrane as a helical segment. The Cytoplasmic segment spans residues 177-178 (LQ). A helical membrane pass occupies residues 179 to 199 (GYAFAFGYMNLFGVIMQNVFP). The Lumenal segment spans residues 200 to 245 (AAPPWYKILYGLQSANYDMHGSPGGLARIDKLLGINMYTTAFSNSS). A helical transmembrane segment spans residues 246–266 (VIFGAFPSLHSGCATMEALFF). Residues 267-268 (CY) are Cytoplasmic-facing. Residues 269 to 289 (CFPKLKPLFIAYVCWLWWSTM) traverse the membrane as a helical segment. Residues 290–291 (YL) are Lumenal-facing. A helical membrane pass occupies residues 292–312 (THHYFVDLMAGSVLSYVIFQY). At 313–401 (TKYTHLPIVD…SITSLGVKRA (89 aa)) the chain is on the cytoplasmic side. A disordered region spans residues 374–401 (VSPSLFDGSTSVSRSSATSITSLGVKRA). A compositionally biased stretch (low complexity) spans 382 to 395 (STSVSRSSATSITS). Residues S392 and S395 each carry the phosphoserine modification.

It belongs to the AUR1 family. As to quaternary structure, component of the inositol phosphorylceramide synthase complex composed of at least AUR1 and KEI1.

It is found in the golgi apparatus. The protein resides in the golgi stack membrane. It carries out the reaction an N-(2R-hydroxy-very-long-chain fatty acyl)-(R)-4-hydroxysphingoid base + a 1,2-diacyl-sn-glycero-3-phospho-(1D-myo-inositol) = a 1D-myo-inositol-1-phospho-N-[(R)-2-hydroxy-very-long-chain fatty acyl]-(R)-4-hydroxysphingoid base + a 1,2-diacyl-sn-glycerol. Its activity is regulated as follows. Inhibited by aureobasidin A (AbA), khafrefungin and rustmicin. Its function is as follows. Catalytic component of the inositol phosphorylceramide synthase which catalyzes the addition of a phosphorylinositol group onto ceramide to form inositol phosphorylceramide, an essential step in sphingolipid biosynthesis. The sequence is that of Inositol phosphorylceramide synthase catalytic subunit AUR1 from Saccharomyces cerevisiae (strain ATCC 204508 / S288c) (Baker's yeast).